The following is a 473-amino-acid chain: Ornithine aminotransferase, mitochondrial (473 aa).

A mitochondrion-targeting transit peptide spans 1–32; it reads MAAALARRGGGGLARALARGRGMCSATAAERA. At K293 the chain carries N6-(pyridoxal phosphate)lysine.

This sequence belongs to the class-III pyridoxal-phosphate-dependent aminotransferase family. As to quaternary structure, homotetramer. The cofactor is pyridoxal 5'-phosphate.

Its subcellular location is the mitochondrion matrix. It carries out the reaction a 2-oxocarboxylate + L-ornithine = L-glutamate 5-semialdehyde + an L-alpha-amino acid. Its pathway is amino-acid biosynthesis; L-proline biosynthesis; L-glutamate 5-semialdehyde from L-ornithine: step 1/1. Confers drought and oxidative stress tolerance mainly through enhancing ROS-scavenging capacity and Pro pre-accumulation. In Oryza sativa subsp. japonica (Rice), this protein is Ornithine aminotransferase, mitochondrial (OAT).